A 411-amino-acid polypeptide reads, in one-letter code: Multifunctional CCA protein (411 aa).

ATP is bound by residues Gly-8 and Arg-11. CTP is bound by residues Gly-8 and Arg-11. Asp-21 and Asp-23 together coordinate Mg(2+). 3 residues coordinate ATP: Arg-91, Arg-137, and Arg-140. Positions 91, 137, and 140 each coordinate CTP. Residues 226–327 form the HD domain; the sequence is TGVHVMLVID…LRFLQETDAL (102 aa).

Belongs to the tRNA nucleotidyltransferase/poly(A) polymerase family. Bacterial CCA-adding enzyme type 1 subfamily. In terms of assembly, monomer. Can also form homodimers and oligomers. The cofactor is Mg(2+). Ni(2+) serves as cofactor.

The enzyme catalyses a tRNA precursor + 2 CTP + ATP = a tRNA with a 3' CCA end + 3 diphosphate. The catalysed reaction is a tRNA with a 3' CCA end + 2 CTP + ATP = a tRNA with a 3' CCACCA end + 3 diphosphate. Its function is as follows. Catalyzes the addition and repair of the essential 3'-terminal CCA sequence in tRNAs without using a nucleic acid template. Adds these three nucleotides in the order of C, C, and A to the tRNA nucleotide-73, using CTP and ATP as substrates and producing inorganic pyrophosphate. tRNA 3'-terminal CCA addition is required both for tRNA processing and repair. Also involved in tRNA surveillance by mediating tandem CCA addition to generate a CCACCA at the 3' terminus of unstable tRNAs. While stable tRNAs receive only 3'-terminal CCA, unstable tRNAs are marked with CCACCA and rapidly degraded. In Methylobacillus flagellatus (strain ATCC 51484 / DSM 6875 / VKM B-1610 / KT), this protein is Multifunctional CCA protein.